The chain runs to 401 residues: MSLFNINKSKKYLIAVSGGPDSVFLLCNIVKLVDPNDLVVCHVNYNFRSDSNNDQMIVTNLCKQLNLKLEILNINKDYSLLKQNFESWARAQRYDFFNMIASKYQIYNLLVAHNLNDLIETYLLQLQRNNLVDYYGLKPVSHYKDLVVYRPLLDIKKSQILNYLNTNKISYAVDSTNSDIKYQRNKIRATLNENNFTKILDQINKANNNLNSIKKIVDNYLKNNIINNELNLTKELFLLDQTCIQRIIYTYFKLINKENLLLNRSNKTISEIVKRLVNSNKNYWKINLNDHSLIKDYNKLFVIKNSLLEPKTIIINDLNDLINQTTFKNIKEIEQIILKDKNFSYVITTDYEMYKSITTIANKKTNRYFIDRKISYKTRLLSPVVYNIKNKIILNKIKKHY.

17 to 22 serves as a coordination point for ATP; that stretch reads SGGPDS.

This sequence belongs to the tRNA(Ile)-lysidine synthase family.

It is found in the cytoplasm. It catalyses the reaction cytidine(34) in tRNA(Ile2) + L-lysine + ATP = lysidine(34) in tRNA(Ile2) + AMP + diphosphate + H(+). Ligates lysine onto the cytidine present at position 34 of the AUA codon-specific tRNA(Ile) that contains the anticodon CAU, in an ATP-dependent manner. Cytidine is converted to lysidine, thus changing the amino acid specificity of the tRNA from methionine to isoleucine. This Mycoplasma mycoides subsp. mycoides SC (strain CCUG 32753 / NCTC 10114 / PG1) protein is tRNA(Ile)-lysidine synthase.